Here is a 428-residue protein sequence, read N- to C-terminus: Dihydroorotase (428 aa).

2 residues coordinate Zn(2+): His-59 and His-61. Substrate-binding positions include 61-63 (HLR) and Asn-93. The Zn(2+) site is built by Asp-151, His-178, and His-231. Asn-277 contributes to the substrate binding site. Asp-304 contacts Zn(2+). Residue Asp-304 is part of the active site. Residues His-308 and 322–323 (FG) contribute to the substrate site.

Belongs to the metallo-dependent hydrolases superfamily. DHOase family. Class I DHOase subfamily. Zn(2+) serves as cofactor.

The catalysed reaction is (S)-dihydroorotate + H2O = N-carbamoyl-L-aspartate + H(+). It participates in pyrimidine metabolism; UMP biosynthesis via de novo pathway; (S)-dihydroorotate from bicarbonate: step 3/3. In terms of biological role, catalyzes the reversible cyclization of carbamoyl aspartate to dihydroorotate. This chain is Dihydroorotase, found in Bacillus anthracis (strain A0248).